We begin with the raw amino-acid sequence, 380 residues long: Cytochrome b (380 aa).

Transmembrane regions (helical) follow at residues 34-54, 78-99, 114-134, and 179-199; these read FGSLLGICLATQILTGLLLAM, WLIRNLHANGASFFFICVYLHI, WNTGILLLLTLMATAFVGYVL, and FFALHFLLPFAIAGLTLIHLT. Residues H84 and H98 each contribute to the heme b site. The heme b site is built by H183 and H197. H202 provides a ligand contact to a ubiquinone. Helical transmembrane passes span 227–247, 289–309, 321–341, and 348–368; these read LKDALGFMLMFLPLTTLALFS, LGGVLALAASVLILFLSPLLH, LSQLLFWTLVANLFILTWVGS, and FIIIGQLASLTYFTILLILFP.

The protein belongs to the cytochrome b family. In terms of assembly, the cytochrome bc1 complex contains 11 subunits: 3 respiratory subunits (MT-CYB, CYC1 and UQCRFS1), 2 core proteins (UQCRC1 and UQCRC2) and 6 low-molecular weight proteins (UQCRH/QCR6, UQCRB/QCR7, UQCRQ/QCR8, UQCR10/QCR9, UQCR11/QCR10 and a cleavage product of UQCRFS1). This cytochrome bc1 complex then forms a dimer. It depends on heme b as a cofactor.

It localises to the mitochondrion inner membrane. Its function is as follows. Component of the ubiquinol-cytochrome c reductase complex (complex III or cytochrome b-c1 complex) that is part of the mitochondrial respiratory chain. The b-c1 complex mediates electron transfer from ubiquinol to cytochrome c. Contributes to the generation of a proton gradient across the mitochondrial membrane that is then used for ATP synthesis. The sequence is that of Cytochrome b (MT-CYB) from Oceanites oceanicus (Wilson's storm petrel).